A 294-amino-acid polypeptide reads, in one-letter code: Sperm acrosome membrane-associated protein 1 (294 aa).

Positions 1–29 (MSPRGTGCSAGLLMTVGWLLLAGLQSARG) are cleaved as a signal peptide. Residues 30 to 221 (TNVTAAVQDA…LPATDAALIF (192 aa)) lie on the Extracellular side of the membrane. Asn31 carries N-linked (GlcNAc...) asparagine glycosylation. The interval 42 to 70 (AHEGEGEEETENNDSETAENYAPPETEDV) is disordered. Over residues 46–58 (EGEEETENNDSET) the composition is skewed to acidic residues. A helical membrane pass occupies residues 222–242 (VLTIGVIICVFIIFLLIFIII). The Cytoplasmic portion of the chain corresponds to 243–294 (NWAAVKAFWGAKASTPEVQSEQSSVRYKDSTSLDQLPTEMPGEDDALSEWNE). Residue Ser256 is modified to Phosphoserine. Positions 258–267 (PEVQSEQSSV) are enriched in polar residues. Positions 258 to 294 (PEVQSEQSSVRYKDSTSLDQLPTEMPGEDDALSEWNE) are disordered. At Tyr269 the chain carries Phosphotyrosine. Residues 283–294 (PGEDDALSEWNE) are compositionally biased toward acidic residues. A Phosphoserine modification is found at Ser290.

Interacts with CYLC1; the interaction may be relevant for proper acrosome attachment to the nuclear envelope. N-glycosylated. As to expression, testis specific.

It is found in the cytoplasmic vesicle. It localises to the secretory vesicle. The protein localises to the acrosome inner membrane. Its function is as follows. Plays a role in acrosome formation and establishment of normal sperm morphology during spermatogenesis. Important for male fertility. This is Sperm acrosome membrane-associated protein 1 (SPACA1) from Homo sapiens (Human).